Reading from the N-terminus, the 428-residue chain is Sarcosine reductase complex component B subunit alpha (428 aa).

Pyruvic acid (Cys) is present on Cys242.

Heterotetramer of two alpha and two beta subunits. Component of the sarcosine reductase complex, together with components A and C. PB is substrate specific. The peptide chain is cleaved into beta and alpha chains, and the alpha chain N-terminal cysteine is deaminated and oxidized to form a reactive pyruvoyl group.

It carries out the reaction acetyl phosphate + methylamine + [thioredoxin]-disulfide + H2O = sarcosine + [thioredoxin]-dithiol + phosphate + H(+). Functionally, in the first step of sarcosine reductase, the substrate is bound to component PB via a Schiff base intermediate. Then the PB-activated substrate is nucleophilically attacked by the selenol anion of component PA to transform it to a carboxymethylated selenoether and the respective amine. By action of component PC, acetyl phosphate is formed, leaving component PA in its oxidized state. Finally component PA becomes reduced by the thioredoxin system to start a new catalytic cycle of reductive deamination. The protein is Sarcosine reductase complex component B subunit alpha (grdG) of Peptoclostridium acidaminophilum (Eubacterium acidaminophilum).